The chain runs to 210 residues: GTP pyrophosphokinase YwaC (210 aa).

The protein belongs to the RelA/SpoT family. As to quaternary structure, homotetramer.

The enzyme catalyses GTP + ATP = guanosine 3'-diphosphate 5'-triphosphate + AMP. The protein operates within purine metabolism; ppGpp biosynthesis; ppGpp from GTP: step 1/2. Functionally, functions as a (p)ppGpp synthase; GDP can be used instead of GTP, resulting in an increase of (p)ppGpp synthesis. Overexpression in relA mutants (triple relA-yjbM-ywaC deletions and single relA deletions) leads to growth arrest; GTP levels fall drastically, various guanine-related nucleotides are synthesized (ppGp or pGpp), the cellular transcriptional profile changes dramatically and 70S ribosome dimerization occurs. Overexpression in the presence of a wild-type relA gene does not have these effects. In eubacteria ppGpp (guanosine 3'-diphosphate 5'-diphosphate) is a mediator of the stringent response that coordinates a variety of cellular activities in response to changes in nutritional abundance. activities in response to changes in nutritional abundance. YwaC has probably a minor role in stringent response. The polypeptide is GTP pyrophosphokinase YwaC (ywaC) (Bacillus subtilis (strain 168)).